We begin with the raw amino-acid sequence, 381 residues long: Subtilisin amylosacchariticus (381 aa).

A signal peptide spans 1–29; the sequence is MRSKKLWISLLFALTLIFTMAFSNMSAQA. Positions 30–106 are excised as a propeptide; the sequence is AGKSSTEKKY…VEEDHIAHEY (77 aa). Positions 38-103 constitute an Inhibitor I9 domain; sequence KYIVGFKQTM…VAYVEEDHIA (66 aa). A Ca(2+)-binding site is contributed by glutamine 108. The Peptidase S8 domain maps to 111 to 380; sequence PYGISQIKAP…KGLINVQAAA (270 aa). Catalysis depends on aspartate 138, which acts as the Charge relay system. Aspartate 147 provides a ligand contact to Ca(2+). Histidine 170 (charge relay system) is an active-site residue. The Ca(2+) site is built by leucine 181, asparagine 183, isoleucine 185, valine 187, alanine 275, tyrosine 277, and threonine 280. The active-site Charge relay system is serine 327.

It belongs to the peptidase S8 family. Ca(2+) serves as cofactor.

Its subcellular location is the secreted. The enzyme catalyses Hydrolysis of proteins with broad specificity for peptide bonds, and a preference for a large uncharged residue in P1. Hydrolyzes peptide amides.. Functionally, subtilisin is an extracellular alkaline serine protease, it catalyzes the hydrolysis of proteins and peptide amides. This is Subtilisin amylosacchariticus (apr) from Bacillus subtilis subsp. amylosacchariticus.